Consider the following 105-residue polypeptide: N(4)-acetylcytidine amidohydrolase (105 aa).

An ASCH domain is found at 8 to 93 (TFFEFLTPLV…ALIQEIYPNI (86 aa)). Lys-22 acts as the Proton acceptor in catalysis. The active-site Nucleophile is Thr-25. Glu-75 acts as the Proton donor in catalysis.

It belongs to the N(4)-acetylcytidine amidohydrolase family.

It catalyses the reaction N(4)-acetylcytidine + H2O = cytidine + acetate + H(+). The catalysed reaction is N(4)-acetyl-2'-deoxycytidine + H2O = 2'-deoxycytidine + acetate + H(+). It carries out the reaction N(4)-acetylcytosine + H2O = cytosine + acetate + H(+). Its function is as follows. Catalyzes the hydrolysis of N(4)-acetylcytidine (ac4C). This chain is N(4)-acetylcytidine amidohydrolase, found in Vibrio cholerae serotype O1 (strain ATCC 39315 / El Tor Inaba N16961).